Consider the following 205-residue polypeptide: Large ribosomal subunit protein bL21m (205 aa).

The N-terminal 39 residues, 1 to 39 (MAASSLTVTLGRLASACSHSILRPSGPGAASLWSASRRF), are a transit peptide targeting the mitochondrion.

Belongs to the bacterial ribosomal protein bL21 family. As to quaternary structure, component of the mitochondrial large ribosomal subunit (mt-LSU). Mature mammalian 55S mitochondrial ribosomes consist of a small (28S) and a large (39S) subunit. The 28S small subunit contains a 12S ribosomal RNA (12S mt-rRNA) and 30 different proteins. The 39S large subunit contains a 16S rRNA (16S mt-rRNA), a copy of mitochondrial valine transfer RNA (mt-tRNA(Val)), which plays an integral structural role, and 52 different proteins.

The protein localises to the mitochondrion. This Homo sapiens (Human) protein is Large ribosomal subunit protein bL21m (MRPL21).